Here is a 35-residue protein sequence, read N- to C-terminus: Photosystem II reaction center protein T (35 aa).

Residues 3–23 (ALVYTFLLVSTLGILFFAIFF) traverse the membrane as a helical segment.

Belongs to the PsbT family. PSII is composed of 1 copy each of membrane proteins PsbA, PsbB, PsbC, PsbD, PsbE, PsbF, PsbH, PsbI, PsbJ, PsbK, PsbL, PsbM, PsbT, PsbY, PsbZ, Psb30/Ycf12, at least 3 peripheral proteins of the oxygen-evolving complex and a large number of cofactors. It forms dimeric complexes.

It localises to the plastid. The protein localises to the chloroplast thylakoid membrane. Functionally, found at the monomer-monomer interface of the photosystem II (PS II) dimer, plays a role in assembly and dimerization of PSII. PSII is a light-driven water plastoquinone oxidoreductase, using light energy to abstract electrons from H(2)O, generating a proton gradient subsequently used for ATP formation. The chain is Photosystem II reaction center protein T from Gnetum gnemon (Spanish joint-fir).